The following is a 671-amino-acid chain: DNA ligase (671 aa).

Residues 32 to 36 (DVEYD), 81 to 82 (SL), and glutamate 113 each bind NAD(+). The active-site N6-AMP-lysine intermediate is the lysine 115. Arginine 136, glutamate 173, lysine 290, and lysine 314 together coordinate NAD(+). Zn(2+) is bound by residues cysteine 408, cysteine 411, cysteine 426, and cysteine 432. Positions 593 to 671 (EIDSPFAGKT…EAEMLRLLGS (79 aa)) constitute a BRCT domain.

The protein belongs to the NAD-dependent DNA ligase family. LigA subfamily. Mg(2+) is required as a cofactor. Mn(2+) serves as cofactor.

The catalysed reaction is NAD(+) + (deoxyribonucleotide)n-3'-hydroxyl + 5'-phospho-(deoxyribonucleotide)m = (deoxyribonucleotide)n+m + AMP + beta-nicotinamide D-nucleotide.. In terms of biological role, DNA ligase that catalyzes the formation of phosphodiester linkages between 5'-phosphoryl and 3'-hydroxyl groups in double-stranded DNA using NAD as a coenzyme and as the energy source for the reaction. It is essential for DNA replication and repair of damaged DNA. This chain is DNA ligase, found in Escherichia coli O17:K52:H18 (strain UMN026 / ExPEC).